The chain runs to 283 residues: 1D-myo-inositol 2-acetamido-2-deoxy-alpha-D-glucopyranoside deacetylase (283 aa).

Positions 7, 10, and 148 each coordinate Zn(2+).

The protein belongs to the MshB deacetylase family. It depends on Zn(2+) as a cofactor.

It catalyses the reaction 1D-myo-inositol 2-acetamido-2-deoxy-alpha-D-glucopyranoside + H2O = 1D-myo-inositol 2-amino-2-deoxy-alpha-D-glucopyranoside + acetate. Its function is as follows. Catalyzes the deacetylation of 1D-myo-inositol 2-acetamido-2-deoxy-alpha-D-glucopyranoside (GlcNAc-Ins) in the mycothiol biosynthesis pathway. In Gordonia bronchialis (strain ATCC 25592 / DSM 43247 / BCRC 13721 / JCM 3198 / KCTC 3076 / NBRC 16047 / NCTC 10667) (Rhodococcus bronchialis), this protein is 1D-myo-inositol 2-acetamido-2-deoxy-alpha-D-glucopyranoside deacetylase.